Reading from the N-terminus, the 112-residue chain is uncharacterized protein (112 aa).

N-linked (GlcNAc...) asparagine; by host glycosylation is found at N29 and N60. Residues 66-86 traverse the membrane as a helical segment; sequence IFNGLGFILIVIFIYLLLITL.

Belongs to the asfivirus B117L family.

The protein resides in the host membrane. It localises to the virion. This is an uncharacterized protein from Ornithodoros (relapsing fever ticks).